We begin with the raw amino-acid sequence, 444 residues long: Ribulose bisphosphate carboxylase (444 aa).

K163 functions as the Proton acceptor in the catalytic mechanism. K165 provides a ligand contact to substrate. Positions 189, 191, and 192 each coordinate Mg(2+). An N6-carboxylysine modification is found at K189. H281 functions as the Proton acceptor in the catalytic mechanism. Residues R282, H314, 367–369 (SGG), and 389–392 (QLGG) each bind substrate.

The protein belongs to the RuBisCO large chain family. Type III subfamily. Homodecamer, consisting of five dimer units which form a ring-like pentagonal structure. This arrangement is essential for its high thermostability. In contrast to form I RuBisCO, the form III RuBisCO is composed solely of large subunits. Mg(2+) serves as cofactor.

The enzyme catalyses 2 (2R)-3-phosphoglycerate + 2 H(+) = D-ribulose 1,5-bisphosphate + CO2 + H2O. It carries out the reaction D-ribulose 1,5-bisphosphate + O2 = 2-phosphoglycolate + (2R)-3-phosphoglycerate + 2 H(+). In terms of biological role, catalyzes the addition of molecular CO(2) and H(2)O to ribulose 1,5-bisphosphate (RuBP), generating two molecules of 3-phosphoglycerate (3-PGA). Functions in an archaeal AMP degradation pathway, together with AMP phosphorylase and R15P isomerase. The polypeptide is Ribulose bisphosphate carboxylase (Thermococcus kodakarensis (strain ATCC BAA-918 / JCM 12380 / KOD1) (Pyrococcus kodakaraensis (strain KOD1))).